The following is a 463-amino-acid chain: L-seryl-tRNA(Sec) selenium transferase (463 aa).

Position 295 is an N6-(pyridoxal phosphate)lysine (Lys295).

It belongs to the SelA family. As to quaternary structure, homodecamer; pentamer of dimers. Binds only one seryl-tRNA(Sec) per dimer. Pyridoxal 5'-phosphate serves as cofactor.

Its subcellular location is the cytoplasm. The enzyme catalyses L-seryl-tRNA(Sec) + selenophosphate + H(+) = L-selenocysteinyl-tRNA(Sec) + phosphate. It participates in aminoacyl-tRNA biosynthesis; selenocysteinyl-tRNA(Sec) biosynthesis; selenocysteinyl-tRNA(Sec) from L-seryl-tRNA(Sec) (bacterial route): step 1/1. Functionally, converts seryl-tRNA(Sec) to selenocysteinyl-tRNA(Sec) required for selenoprotein biosynthesis. The polypeptide is L-seryl-tRNA(Sec) selenium transferase (Escherichia coli O127:H6 (strain E2348/69 / EPEC)).